Consider the following 308-residue polypeptide: Glutaminase (308 aa).

Substrate-binding residues include serine 68, asparagine 118, glutamate 162, asparagine 169, tyrosine 193, tyrosine 244, and valine 262.

The protein belongs to the glutaminase family. As to quaternary structure, homotetramer.

The enzyme catalyses L-glutamine + H2O = L-glutamate + NH4(+). The chain is Glutaminase from Hahella chejuensis (strain KCTC 2396).